An 885-amino-acid chain; its full sequence is Alanine--tRNA ligase (885 aa).

Residues His564, His568, Cys676, and His680 each coordinate Zn(2+).

The protein belongs to the class-II aminoacyl-tRNA synthetase family. Requires Zn(2+) as cofactor.

It is found in the cytoplasm. It catalyses the reaction tRNA(Ala) + L-alanine + ATP = L-alanyl-tRNA(Ala) + AMP + diphosphate. Catalyzes the attachment of alanine to tRNA(Ala) in a two-step reaction: alanine is first activated by ATP to form Ala-AMP and then transferred to the acceptor end of tRNA(Ala). Also edits incorrectly charged Ser-tRNA(Ala) and Gly-tRNA(Ala) via its editing domain. In Brucella ovis (strain ATCC 25840 / 63/290 / NCTC 10512), this protein is Alanine--tRNA ligase.